A 137-amino-acid polypeptide reads, in one-letter code: Small ribosomal subunit protein uS12 (137 aa).

Residues 1 to 55 (MPTINQLVRKPRQSKSKKSDSPALNRNFNSKKKKFTDLNSPQKRGVCTRVGTMTP) form a disordered region. Residue D102 is modified to 3-methylthioaspartic acid. The tract at residues 118–137 (SGVDGRRQGRSLYGTKKPKK) is disordered.

It belongs to the universal ribosomal protein uS12 family. Part of the 30S ribosomal subunit. Contacts proteins S8 and S17. May interact with IF1 in the 30S initiation complex.

Functionally, with S4 and S5 plays an important role in translational accuracy. Its function is as follows. Interacts with and stabilizes bases of the 16S rRNA that are involved in tRNA selection in the A site and with the mRNA backbone. Located at the interface of the 30S and 50S subunits, it traverses the body of the 30S subunit contacting proteins on the other side and probably holding the rRNA structure together. The combined cluster of proteins S8, S12 and S17 appears to hold together the shoulder and platform of the 30S subunit. The chain is Small ribosomal subunit protein uS12 from Staphylococcus saprophyticus subsp. saprophyticus (strain ATCC 15305 / DSM 20229 / NCIMB 8711 / NCTC 7292 / S-41).